The chain runs to 285 residues: HTH-type transcriptional regulator HexR (285 aa).

The 77-residue stretch at 2-78 (KNLLEQIQSR…IQLAQSLASG (77 aa)) folds into the HTH rpiR-type domain. The segment at residues 38–57 (IAALAQAAAVSEPTVNRFCR) is a DNA-binding region (H-T-H motif). In terms of domain architecture, SIS spans 122 to 261 (AVDLLIQARQ…ATGVTLRRGV (140 aa)).

Functionally, involved in regulation of glucose metabolism. Transcriptional repressor of the gap-1 gene and of the edd-glk-gltR-2 and zwf-pgl-eda operons. Acts by binding directly to an inverted pseudopalindromic sequence in the promoter region. The protein is HTH-type transcriptional regulator HexR of Pseudomonas aeruginosa (strain ATCC 15692 / DSM 22644 / CIP 104116 / JCM 14847 / LMG 12228 / 1C / PRS 101 / PAO1).